The chain runs to 336 residues: Aldehyde reductase AdhA (336 aa).

8 residues coordinate Zn(2+): C36, C39, H61, C92, C95, C98, C106, and C148.

It belongs to the zinc-containing alcohol dehydrogenase family. Homotetramer. Zn(2+) is required as a cofactor.

It is found in the cytoplasm. It catalyses the reaction a primary alcohol + NADP(+) = an aldehyde + NADPH + H(+). Its function is as follows. Active on a wide variety of primary alcohols and their corresponding aldehydes, but not against ketones nor secondary alcohols. Active on aliphatic compounds up to 5 carbons in length and aromatic alcohols, less effective on branched-chain primary alcohols. Prefers NADPH to NADH. Its catalytic efficiency is greatest for aldehydes, suggesting the reduction of aromatic and medium-chain aliphatic aldehydes is its in vivo activity. Plays a role in tolerance to internally produced ethanol. This is Aldehyde reductase AdhA from Synechocystis sp. (strain ATCC 27184 / PCC 6803 / Kazusa).